The primary structure comprises 1445 residues: DNA-directed RNA polymerase subunit beta'' (1445 aa).

Zn(2+) contacts are provided by Cys-220, Cys-293, Cys-300, and Cys-303.

It belongs to the RNA polymerase beta' chain family. RpoC2 subfamily. As to quaternary structure, in plastids the minimal PEP RNA polymerase catalytic core is composed of four subunits: alpha, beta, beta', and beta''. When a (nuclear-encoded) sigma factor is associated with the core the holoenzyme is formed, which can initiate transcription. Zn(2+) serves as cofactor.

It localises to the plastid. Its subcellular location is the chloroplast. It catalyses the reaction RNA(n) + a ribonucleoside 5'-triphosphate = RNA(n+1) + diphosphate. In terms of biological role, DNA-dependent RNA polymerase catalyzes the transcription of DNA into RNA using the four ribonucleoside triphosphates as substrates. The polypeptide is DNA-directed RNA polymerase subunit beta'' (Anthoceros angustus (Hornwort)).